The sequence spans 97 residues: Co-chaperonin GroES (97 aa).

It belongs to the GroES chaperonin family. Heptamer of 7 subunits arranged in a ring. Interacts with the chaperonin GroEL.

It localises to the cytoplasm. Together with the chaperonin GroEL, plays an essential role in assisting protein folding. The GroEL-GroES system forms a nano-cage that allows encapsulation of the non-native substrate proteins and provides a physical environment optimized to promote and accelerate protein folding. GroES binds to the apical surface of the GroEL ring, thereby capping the opening of the GroEL channel. This chain is Co-chaperonin GroES, found in Bifidobacterium longum (strain NCC 2705).